The primary structure comprises 149 residues: Deoxyuridine 5'-triphosphate nucleotidohydrolase (149 aa).

Substrate-binding positions include 68-70 (RSG), Asn81, 85-87 (LID), and Met95.

Belongs to the dUTPase family. Requires Mg(2+) as cofactor.

The catalysed reaction is dUTP + H2O = dUMP + diphosphate + H(+). The protein operates within pyrimidine metabolism; dUMP biosynthesis; dUMP from dCTP (dUTP route): step 2/2. This enzyme is involved in nucleotide metabolism: it produces dUMP, the immediate precursor of thymidine nucleotides and it decreases the intracellular concentration of dUTP so that uracil cannot be incorporated into DNA. The polypeptide is Deoxyuridine 5'-triphosphate nucleotidohydrolase (Bordetella avium (strain 197N)).